The following is a 348-amino-acid chain: GPALPP motifs-containing protein 1 (348 aa).

Disordered regions lie at residues 1–163 (MARD…AKGP) and 177–317 (QRMK…DLKV). N-acetylalanine is present on Ala2. A GPALPP motif 1 motif is present at residues 7–12 (GPALPP). Over residues 14–27 (FKERATVEDQERDP) the composition is skewed to basic and acidic residues. Position 28 is a phosphoserine (Ser28). The GPALPP motif 2 motif lies at 32-37 (GPALPP). The span at 41–59 (SSSSDSSDSNEDSSSLSEE) shows a compositional bias: low complexity. The span at 60–69 (GNQESEEDDA) shows a compositional bias: acidic residues. The short motif at 93–98 (GPALPP) is the GPALPP motif 3 element. A Phosphoserine modification is found at Ser106. The span at 108-117 (PRPIIGPALP) shows a compositional bias: pro residues. Residues 113 to 118 (GPALPP) carry the GPALPP motif 4 motif. 3 positions are modified to phosphoserine: Ser138, Ser143, and Ser148. Over residues 144–154 (EEAESGEDEDI) the composition is skewed to acidic residues. 4 stretches are compositionally biased toward basic and acidic residues: residues 177-195 (QRMK…KPVT), 235-269 (PADR…KRLA), 277-287 (ESKRSESLMDI), and 295-317 (KAAE…DLKV). Glycyl lysine isopeptide (Lys-Gly) (interchain with G-Cter in SUMO2) cross-links involve residues Lys279 and Lys316.

The chain is GPALPP motifs-containing protein 1 (Gpalpp1) from Rattus norvegicus (Rat).